A 186-amino-acid chain; its full sequence is uncharacterized protein (186 aa).

N-linked (GlcNAc...) asparagine; by host glycosylation occurs at N34. 3 helical membrane-spanning segments follow: residues 47 to 67, 114 to 134, and 144 to 164; these read IGMV…ATTF, ILET…IVLL, and LEMI…TLFF.

It localises to the membrane. This is an uncharacterized protein from Acanthamoeba polyphaga mimivirus (APMV).